A 253-amino-acid chain; its full sequence is Small ribosomal subunit protein uS2 (253 aa).

Belongs to the universal ribosomal protein uS2 family.

The protein is Small ribosomal subunit protein uS2 of Parvibaculum lavamentivorans (strain DS-1 / DSM 13023 / NCIMB 13966).